The following is a 222-amino-acid chain: uncharacterized protein (222 aa).

Residues 8 to 77 form the HTH gntR-type domain; sequence AKKGQIIYRY…GNAGYFVAKN (70 aa).

This is an uncharacterized protein from Mycoplasma pneumoniae (strain ATCC 29342 / M129 / Subtype 1) (Mycoplasmoides pneumoniae).